The chain runs to 29 residues: Augerpeptide hheTx2 (29 aa).

Contains 4 disulfide bonds. Expressed by the venom duct.

Its subcellular location is the secreted. The protein is Augerpeptide hheTx2 of Hastula hectica (Sea snail).